Here is a 362-residue protein sequence, read N- to C-terminus: 3-dehydroquinate synthase (362 aa).

Residues aspartate 71–lysine 76, glycine 105–aspartate 109, threonine 129–threonine 130, lysine 142, lysine 151, and cysteine 169–threonine 172 contribute to the NAD(+) site. Glutamate 184, histidine 247, and histidine 264 together coordinate Zn(2+).

The protein belongs to the sugar phosphate cyclases superfamily. Dehydroquinate synthase family. Requires Co(2+) as cofactor. Zn(2+) is required as a cofactor. NAD(+) serves as cofactor.

The protein resides in the cytoplasm. The catalysed reaction is 7-phospho-2-dehydro-3-deoxy-D-arabino-heptonate = 3-dehydroquinate + phosphate. The protein operates within metabolic intermediate biosynthesis; chorismate biosynthesis; chorismate from D-erythrose 4-phosphate and phosphoenolpyruvate: step 2/7. Catalyzes the conversion of 3-deoxy-D-arabino-heptulosonate 7-phosphate (DAHP) to dehydroquinate (DHQ). This is 3-dehydroquinate synthase from Citrobacter koseri (strain ATCC BAA-895 / CDC 4225-83 / SGSC4696).